We begin with the raw amino-acid sequence, 910 residues long: Protein translocase subunit SecA (910 aa).

Residues Gln-87, Gly-105–Thr-109, and Asp-508 contribute to the ATP site. The segment at Arg-848 to Ser-910 is disordered. A compositionally biased stretch (low complexity) spans Ala-869–Gln-880. Zn(2+)-binding residues include Cys-894, Cys-896, Cys-905, and His-906. A compositionally biased stretch (basic residues) spans Lys-900 to Ser-910.

This sequence belongs to the SecA family. Monomer and homodimer. Part of the essential Sec protein translocation apparatus which comprises SecA, SecYEG and auxiliary proteins SecDF-YajC and YidC. It depends on Zn(2+) as a cofactor.

The protein localises to the cell inner membrane. Its subcellular location is the cytoplasm. The catalysed reaction is ATP + H2O + cellular proteinSide 1 = ADP + phosphate + cellular proteinSide 2.. Its function is as follows. Part of the Sec protein translocase complex. Interacts with the SecYEG preprotein conducting channel. Has a central role in coupling the hydrolysis of ATP to the transfer of proteins into and across the cell membrane, serving both as a receptor for the preprotein-SecB complex and as an ATP-driven molecular motor driving the stepwise translocation of polypeptide chains across the membrane. In Stenotrophomonas maltophilia (strain K279a), this protein is Protein translocase subunit SecA.